A 139-amino-acid polypeptide reads, in one-letter code: Transcriptional regulator WhiB5 (139 aa).

Residues 4-77 (PCATDPELWF…AGIKLPGGQY (74 aa)) form the 4Fe-4S Wbl-type domain. 4 residues coordinate [4Fe-4S] cluster: cysteine 5, cysteine 41, cysteine 45, and cysteine 53.

This sequence belongs to the WhiB family. [4Fe-4S] cluster is required as a cofactor. The Fe-S cluster can be nitrosylated by nitric oxide (NO). Post-translationally, upon Fe-S cluster removal intramolecular disulfide bonds are formed.

The protein localises to the cytoplasm. Functionally, a transcription factor that is probably redox-responsive. Probably plays a role in immunomodulation and reactivation after chronic infection. Its induction results in transcription of a number of genes including sigM, and the genes for 2 type VII secretion systems ESX-2 and ESX-4. Seems to negatively regulate its own expression. The apo-form has been shown to act as a protein disulfide reductase. The apo- but not holo-form probably binds DNA. The polypeptide is Transcriptional regulator WhiB5 (whiB5) (Mycobacterium tuberculosis (strain ATCC 25618 / H37Rv)).